Here is a 220-residue protein sequence, read N- to C-terminus: 2-hydroxy-3-keto-5-methylthiopentenyl-1-phosphate phosphatase (220 aa).

The protein belongs to the HAD-like hydrolase superfamily. MtnX family.

The enzyme catalyses 2-hydroxy-5-methylsulfanyl-3-oxopent-1-enyl phosphate + H2O = 1,2-dihydroxy-5-(methylsulfanyl)pent-1-en-3-one + phosphate. Its pathway is amino-acid biosynthesis; L-methionine biosynthesis via salvage pathway; L-methionine from S-methyl-5-thio-alpha-D-ribose 1-phosphate: step 4/6. Its function is as follows. Dephosphorylates 2-hydroxy-3-keto-5-methylthiopentenyl-1-phosphate (HK-MTPenyl-1-P) yielding 1,2-dihydroxy-3-keto-5-methylthiopentene (DHK-MTPene). In Geobacillus kaustophilus (strain HTA426), this protein is 2-hydroxy-3-keto-5-methylthiopentenyl-1-phosphate phosphatase.